We begin with the raw amino-acid sequence, 192 residues long: Fe/S biogenesis protein NfuA (192 aa).

[4Fe-4S] cluster contacts are provided by cysteine 149 and cysteine 152.

The protein belongs to the NfuA family. In terms of assembly, homodimer. It depends on [4Fe-4S] cluster as a cofactor.

Functionally, involved in iron-sulfur cluster biogenesis. Binds a 4Fe-4S cluster, can transfer this cluster to apoproteins, and thereby intervenes in the maturation of Fe/S proteins. Could also act as a scaffold/chaperone for damaged Fe/S proteins. The protein is Fe/S biogenesis protein NfuA of Alteromonas mediterranea (strain DSM 17117 / CIP 110805 / LMG 28347 / Deep ecotype).